The following is a 306-amino-acid chain: Ribosomal RNA small subunit methyltransferase H (306 aa).

S-adenosyl-L-methionine contacts are provided by residues Gly37 to His39, Asp56, Asp102, and Gln109.

The protein belongs to the methyltransferase superfamily. RsmH family.

The protein resides in the cytoplasm. The enzyme catalyses cytidine(1402) in 16S rRNA + S-adenosyl-L-methionine = N(4)-methylcytidine(1402) in 16S rRNA + S-adenosyl-L-homocysteine + H(+). Specifically methylates the N4 position of cytidine in position 1402 (C1402) of 16S rRNA. This Nautilia profundicola (strain ATCC BAA-1463 / DSM 18972 / AmH) protein is Ribosomal RNA small subunit methyltransferase H.